The sequence spans 356 residues: Protein-glutamate methylesterase/protein-glutamine glutaminase 2 (356 aa).

The Response regulatory domain occupies 4–121 (KVLIVDDSAV…KGFLEESSHE (118 aa)). Position 55 is a 4-aspartylphosphate (Asp-55). In terms of domain architecture, CheB-type methylesterase spans 169 to 356 (FATTERIIAI…LELIAKAICR (188 aa)). Residues Ser-181, His-207, and Asp-303 contribute to the active site.

Belongs to the CheB family. Post-translationally, phosphorylated by CheA. Phosphorylation of the N-terminal regulatory domain activates the methylesterase activity.

It is found in the cytoplasm. The catalysed reaction is [protein]-L-glutamate 5-O-methyl ester + H2O = L-glutamyl-[protein] + methanol + H(+). It carries out the reaction L-glutaminyl-[protein] + H2O = L-glutamyl-[protein] + NH4(+). Involved in chemotaxis. Part of a chemotaxis signal transduction system that modulates chemotaxis in response to various stimuli. Catalyzes the demethylation of specific methylglutamate residues introduced into the chemoreceptors (methyl-accepting chemotaxis proteins or MCP) by CheR. Also mediates the irreversible deamidation of specific glutamine residues to glutamic acid. In Chromobacterium violaceum (strain ATCC 12472 / DSM 30191 / JCM 1249 / CCUG 213 / NBRC 12614 / NCIMB 9131 / NCTC 9757 / MK), this protein is Protein-glutamate methylesterase/protein-glutamine glutaminase 2.